The following is a 391-amino-acid chain: Septation protein etd1 (391 aa).

Residues 49 to 68 are disordered; sequence MKSYGSDITPRRPKQLGLPK.

Involved in septation. This Schizosaccharomyces pombe (strain 972 / ATCC 24843) (Fission yeast) protein is Septation protein etd1 (etd1).